Reading from the N-terminus, the 402-residue chain is Putative cystathionine beta-lyase (402 aa).

K236 carries the post-translational modification N6-(pyridoxal phosphate)lysine.

This sequence belongs to the class-II pyridoxal-phosphate-dependent aminotransferase family. MalY/PatB cystathionine beta-lyase subfamily. Requires pyridoxal 5'-phosphate as cofactor.

The enzyme catalyses L,L-cystathionine + H2O = L-homocysteine + pyruvate + NH4(+). It catalyses the reaction an S-substituted L-cysteine + H2O = a thiol + pyruvate + NH4(+). The protein operates within amino-acid biosynthesis; L-methionine biosynthesis via de novo pathway; L-homocysteine from L-cystathionine: step 1/1. In Mycobacterium leprae (strain TN), this protein is Putative cystathionine beta-lyase.